The sequence spans 197 residues: 3-isopropylmalate dehydratase small subunit (197 aa).

It belongs to the LeuD family. LeuD type 1 subfamily. Heterodimer of LeuC and LeuD.

The catalysed reaction is (2R,3S)-3-isopropylmalate = (2S)-2-isopropylmalate. The protein operates within amino-acid biosynthesis; L-leucine biosynthesis; L-leucine from 3-methyl-2-oxobutanoate: step 2/4. Its function is as follows. Catalyzes the isomerization between 2-isopropylmalate and 3-isopropylmalate, via the formation of 2-isopropylmaleate. The sequence is that of 3-isopropylmalate dehydratase small subunit from Streptomyces avermitilis (strain ATCC 31267 / DSM 46492 / JCM 5070 / NBRC 14893 / NCIMB 12804 / NRRL 8165 / MA-4680).